The chain runs to 446 residues: tRNA modification GTPase MnmE (446 aa).

Residues R24, E81, and K120 each contribute to the (6S)-5-formyl-5,6,7,8-tetrahydrofolate site. The TrmE-type G domain occupies 216-368; the sequence is GLHAVLIGPP…LHIRLRELAL (153 aa). A K(+)-binding site is contributed by N226. Residues 226–231, 245–251, and 270–273 contribute to the GTP site; these read NAGKSS, TDVAGTT, and DTAG. A Mg(2+)-binding site is contributed by S230. Residues T245, V247, and T250 each contribute to the K(+) site. A Mg(2+)-binding site is contributed by T251. K446 is a binding site for (6S)-5-formyl-5,6,7,8-tetrahydrofolate.

The protein belongs to the TRAFAC class TrmE-Era-EngA-EngB-Septin-like GTPase superfamily. TrmE GTPase family. Homodimer. Heterotetramer of two MnmE and two MnmG subunits. It depends on K(+) as a cofactor.

The protein localises to the cytoplasm. Exhibits a very high intrinsic GTPase hydrolysis rate. Involved in the addition of a carboxymethylaminomethyl (cmnm) group at the wobble position (U34) of certain tRNAs, forming tRNA-cmnm(5)s(2)U34. The sequence is that of tRNA modification GTPase MnmE from Xanthomonas oryzae pv. oryzae (strain MAFF 311018).